The following is a 1773-amino-acid chain: Mucin-22 (1773 aa).

The signal sequence occupies residues 1-26 (MRRGNISPAFWFLWLLLFGLLGPSSE). Over 27 to 1660 (NTTAFTKGSD…VIKPSGYLQP (1634 aa)) the chain is Extracellular. Disordered regions lie at residues 61-102 (TGSK…TDSG), 176-357 (TMAS…SETT), 372-405 (MGSETTTNSTTSSETTVTSTAGSETTTVSTVGSE), 434-572 (SETI…STAS), 590-674 (TVGS…EGSE), 754-1026 (DTTT…ETTM), 1064-1485 (TTIA…GSET), and 1603-1639 (MGASSTTSAHGVRTTTGSTREPTSSTFQETGPVSMGT). A 124 X 10 AA approximate repeats region spans residues 153 to 1514 (MASSTTSTAG…PTATSLTGSE (1362 aa)). Over residues 178–243 (ASTTGSETAT…GSEATTTSTA (66 aa)) the composition is skewed to low complexity. Residues 248 to 258 (ITASSMSSETT) show a composition bias toward polar residues. Residues 262–357 (AAGSNTTTAS…TVSTAGSETT (96 aa)) show a composition bias toward low complexity. Composition is skewed to low complexity over residues 440–481 (STAG…AAST) and 490–546 (STAG…SEPT). The segment covering 547 to 572 (MASTMGSETTMASTIGPETTKVSTAS) has biased composition (polar residues). Composition is skewed to low complexity over residues 755–1025 (TTTA…SETT) and 1064–1465 (TTIA…GSET). Composition is skewed to polar residues over residues 1466-1485 (NTACTTGSETSTPSSAGSET) and 1615-1639 (RTTTGSTREPTSSTFQETGPVSMGT). The chain crosses the membrane as a helical span at residues 1661 to 1681 (WAIILISLAAVVAAVGLSVGL). Residues 1682–1773 (SFCLRNLFFP…GGHYGHGGGH (92 aa)) lie on the Cytoplasmic side of the membrane.

As to expression, expressed in lung by serous cells of the submucosal gland (at protein level). Detected in the placenta, lung and testis.

The protein resides in the membrane. This chain is Mucin-22 (MUC22), found in Homo sapiens (Human).